The following is a 321-amino-acid chain: Glucokinase (321 aa).

G8 to T13 contributes to the ATP binding site.

Belongs to the bacterial glucokinase family.

It is found in the cytoplasm. The enzyme catalyses D-glucose + ATP = D-glucose 6-phosphate + ADP + H(+). The chain is Glucokinase from Salmonella typhi.